The following is a 471-amino-acid chain: Ribosomal protein uS12 methylthiotransferase RimO (471 aa).

The region spanning 19–134 is the MTTase N-terminal domain; that stretch reads PRVGFVSLGC…VMNAVHTHLP (116 aa). C28, C64, C93, C169, C173, and C176 together coordinate [4Fe-4S] cluster. The region spanning 155–396 is the Radical SAM core domain; it reads LTPRHYAYLK…MAVAEEVSTA (242 aa). In terms of domain architecture, TRAM spans 399–471; sequence QKRVGQTMQV…QGHDLVGQPV (73 aa).

The protein belongs to the methylthiotransferase family. RimO subfamily. Requires [4Fe-4S] cluster as cofactor.

The protein localises to the cytoplasm. The enzyme catalyses L-aspartate(89)-[ribosomal protein uS12]-hydrogen + (sulfur carrier)-SH + AH2 + 2 S-adenosyl-L-methionine = 3-methylsulfanyl-L-aspartate(89)-[ribosomal protein uS12]-hydrogen + (sulfur carrier)-H + 5'-deoxyadenosine + L-methionine + A + S-adenosyl-L-homocysteine + 2 H(+). In terms of biological role, catalyzes the methylthiolation of an aspartic acid residue of ribosomal protein uS12. This chain is Ribosomal protein uS12 methylthiotransferase RimO, found in Delftia acidovorans (strain DSM 14801 / SPH-1).